The primary structure comprises 97 residues: Co-chaperonin GroES (97 aa).

The protein belongs to the GroES chaperonin family. In terms of assembly, heptamer of 7 subunits arranged in a ring. Interacts with the chaperonin GroEL.

The protein resides in the cytoplasm. Functionally, together with the chaperonin GroEL, plays an essential role in assisting protein folding. The GroEL-GroES system forms a nano-cage that allows encapsulation of the non-native substrate proteins and provides a physical environment optimized to promote and accelerate protein folding. GroES binds to the apical surface of the GroEL ring, thereby capping the opening of the GroEL channel. The protein is Co-chaperonin GroES of Yersinia enterocolitica.